The primary structure comprises 648 residues: DNA mismatch repair protein MutL (648 aa).

Positions 336-443 are disordered; it reads ERPFEPSSPQ…SGSAGESRAR (108 aa). Residues 370-381 show a composition bias toward polar residues; the sequence is SPESKTHSTWNE. Basic and acidic residues predominate over residues 383 to 410; it reads SRVDTSRAETSRESRIDSPLGERTRDIA.

The protein belongs to the DNA mismatch repair MutL/HexB family.

This protein is involved in the repair of mismatches in DNA. It is required for dam-dependent methyl-directed DNA mismatch repair. May act as a 'molecular matchmaker', a protein that promotes the formation of a stable complex between two or more DNA-binding proteins in an ATP-dependent manner without itself being part of a final effector complex. The polypeptide is DNA mismatch repair protein MutL (Shewanella sp. (strain ANA-3)).